Here is a 146-residue protein sequence, read N- to C-terminus: Large ribosomal subunit protein uL15 (146 aa).

The tract at residues 1–56 (MSDIQLNTLKPAEGSKHAKRRVGRGIGSGLGKTAGRGHKGQKSRSGGFHKVGFEGG) is disordered. Gly residues predominate over residues 24–34 (RGIGSGLGKTA).

The protein belongs to the universal ribosomal protein uL15 family. Part of the 50S ribosomal subunit.

Its function is as follows. Binds to the 23S rRNA. The sequence is that of Large ribosomal subunit protein uL15 from Bordetella bronchiseptica (strain ATCC BAA-588 / NCTC 13252 / RB50) (Alcaligenes bronchisepticus).